Reading from the N-terminus, the 201-residue chain is RILP-like protein 2 (201 aa).

An RH1 domain is found at 14 to 108 (SPEMALDKDP…LRDGPQMGVG (95 aa)). Residues 67-155 (LEMLEALVNQ…AQDELQCYKS (89 aa)) adopt a coiled-coil conformation. The region spanning 121–197 (RPRFTLQELR…TVKSLFSFKQ (77 aa)) is the RH2 domain. Residues 175-201 (TSSPRSNASKEKSTVKSLFSFKQGKNT) are disordered.

This sequence belongs to the RILPL family.

Its subcellular location is the cytoplasm. It is found in the cytosol. The protein localises to the cytoskeleton. It localises to the microtubule organizing center. The protein resides in the centrosome. Its subcellular location is the cell projection. It is found in the cilium. Involved in cell shape and neuronal morphogenesis, positively regulating the establishment and maintenance of dendritic spines. Plays a role in cellular protein transport. This Xenopus laevis (African clawed frog) protein is RILP-like protein 2 (rilpl2).